The sequence spans 126 residues: Protein ApaG (126 aa).

In terms of domain architecture, ApaG spans 2 to 126; it reads TELETSIKID…FRLSIPGLLH (125 aa).

In Shewanella woodyi (strain ATCC 51908 / MS32), this protein is Protein ApaG.